The primary structure comprises 476 residues: MNVLHVASECNPFFKTGGLADVLGSLPKALIKQGINVSVILPKYGHLSDEWQNQLTLKKSFTVSVTWRNQYCGLEQFVDQGVTYYFIDNEYYFKRERLYGYLDEAERFTFFNHAVLSSLPFLDESPDLIHCHDWQSGLIPAYMKTGSVENPVPTVFTIHNLRYQGAFPPDVFRELLHFAPEHFAGLEMDGAINFLKGALVHSDRVTTVSPTYAQEIQTPAFGEGLHGLLHQERGKTRGILNGIDLEDFDPKTDPHVTYPYKHNQMEKRKNKQVIQRLFELPERKDIPLIAMVSRLVEEKGVPLLTQIAGELVTTENVQLAILGTGDPSLEDQLHHLASLHPHQISFKCVFAEPLARKLYAGADLFIMPSRFEPCGLSQMISLRYETVPIVRETGGLYDTIQSYNEEIGEGNGFSFTHYNAHDFLYTIKRALRFYRTEKEWENLLLNIYSSEVGWDVSAKQYTALYEEILGKRKVEA.

Lys-15 serves as a coordination point for ADP-alpha-D-glucose.

This sequence belongs to the glycosyltransferase 1 family. Bacterial/plant glycogen synthase subfamily.

The enzyme catalyses [(1-&gt;4)-alpha-D-glucosyl](n) + ADP-alpha-D-glucose = [(1-&gt;4)-alpha-D-glucosyl](n+1) + ADP + H(+). It participates in glycan biosynthesis; glycogen biosynthesis. In terms of biological role, synthesizes alpha-1,4-glucan chains using ADP-glucose. The chain is Glycogen synthase from Halalkalibacterium halodurans (strain ATCC BAA-125 / DSM 18197 / FERM 7344 / JCM 9153 / C-125) (Bacillus halodurans).